The following is a 518-amino-acid chain: MSRNDVIDDEVHGVHGEYDDSSTLTGSHEDLDVKRPQSLSGEIAFIVVVCMAQLVSQAGLGQVISILPVLGDSFGIGNNMSQLSWFPAAYSLTVGTFILGAGRLGDLYGHKLLFTAGYFWLAIWTLVAAFAESSGPVFFCCCRVLQGIGPAFLLPNGMAILARSYEPGTRKEMVFSAFGSTAPSGFIFGGLVSALAAKYQSWPWGFWFMAILEAVCGIAAIFWVPRTPTPRRETTHSLWARMDIAGCVTGISGLLLFNVALNMAPGARWQDPYIYILLIASLVFFGLFGYIERKAVFPLIPFSAITPDISFVLATLACGWAAFGVWVFYGWEFVQNFRGISPLFACLQFSPAAISGFVASFTTGLILQKLPASVVMMISAAAFCTADTLYATMPIAQSYWAQLFVSIIVMPWGMEMSFPASNILLSNAMPQEHQGVSASLVATIMNYAISLGLGFGAIVETDLNKNGTDLLRGYRGAWYLGVGLAASGIILTMFFALHEYRKSVPMKNKAASREEYLA.

A helical transmembrane segment spans residues 43–63 (IAFIVVVCMAQLVSQAGLGQV). Asn-79 carries N-linked (GlcNAc...) asparagine glycosylation. The next 12 membrane-spanning stretches (helical) occupy residues 82-102 (QLSW…LGAG), 112-132 (LLFT…AFAE), 135-155 (GPVF…FLLP), 177-197 (AFGS…ALAA), 204-224 (WGFW…IFWV), 244-264 (IAGC…LNMA), 272-292 (PYIY…GYIE), 311-331 (FVLA…FYGW), 339-359 (GISP…GFVA), 364-384 (GLIL…AAFC), 400-420 (WAQL…SFPA), and 439-459 (SLVA…GAIV). Asn-466 carries an N-linked (GlcNAc...) asparagine glycan. The helical transmembrane segment at 477 to 497 (AWYLGVGLAASGIILTMFFAL) threads the bilayer.

It belongs to the major facilitator superfamily.

It localises to the cell membrane. In terms of biological role, efflux pump that might be required for efficient secretion of terrein or other secondary metabolies produced by the terrein genne cluster. This Aspergillus terreus (strain NIH 2624 / FGSC A1156) protein is Efflux pump terJ.